A 600-amino-acid polypeptide reads, in one-letter code: Xylulose kinase (600 aa).

Residue 79-82 (WLEA) participates in substrate binding. Ser244 is subject to Phosphoserine. Asp299 contacts substrate. Residues Gly358 and 505 to 509 (GASKN) contribute to the ATP site.

This sequence belongs to the FGGY kinase family.

It is found in the cytoplasm. The enzyme catalyses D-xylulose + ATP = D-xylulose 5-phosphate + ADP + H(+). Its function is as follows. Xylulose kinase necessary for growth in culture media with D-xylulose as the solecarbon source. The polypeptide is Xylulose kinase (Saccharomyces cerevisiae (strain ATCC 204508 / S288c) (Baker's yeast)).